Here is a 208-residue protein sequence, read N- to C-terminus: Probable GTP-binding protein EngB (208 aa).

The 183-residue stretch at Leu23 to Thr205 folds into the EngB-type G domain. GTP-binding positions include Gly31–Ser38, Gly57–Leu61, Asp84–Gly87, Thr154–Asp157, and Phe182–Ala184. Mg(2+) contacts are provided by Ser38 and Thr59.

Belongs to the TRAFAC class TrmE-Era-EngA-EngB-Septin-like GTPase superfamily. EngB GTPase family. It depends on Mg(2+) as a cofactor.

In terms of biological role, necessary for normal cell division and for the maintenance of normal septation. The chain is Probable GTP-binding protein EngB from Helicobacter pylori (strain P12).